The primary structure comprises 442 residues: Lipoyl synthase, apicoplast (442 aa).

The first 25 residues, 1–25 (MHVLTPSLYIYAFFIVCVRLKCGRS), serve as a signal peptide directing secretion. The disordered stretch occupies residues 92–154 (LLRSESATDE…EKKPDWFHVP (63 aa)). The span at 109 to 127 (LKEKLKESPANWGKDKQEE) shows a compositional bias: basic and acidic residues. Positions 177, 182, 188, 203, 207, 210, and 418 each coordinate [4Fe-4S] cluster. One can recognise a Radical SAM core domain in the interval 189 to 407 (WNIGTATIML…KEEGMKMGFK (219 aa)).

This sequence belongs to the radical SAM superfamily. Lipoyl synthase family. The cofactor is [4Fe-4S] cluster.

It localises to the plastid. Its subcellular location is the apicoplast. The enzyme catalyses [[Fe-S] cluster scaffold protein carrying a second [4Fe-4S](2+) cluster] + N(6)-octanoyl-L-lysyl-[protein] + 2 oxidized [2Fe-2S]-[ferredoxin] + 2 S-adenosyl-L-methionine + 4 H(+) = [[Fe-S] cluster scaffold protein] + N(6)-[(R)-dihydrolipoyl]-L-lysyl-[protein] + 4 Fe(3+) + 2 hydrogen sulfide + 2 5'-deoxyadenosine + 2 L-methionine + 2 reduced [2Fe-2S]-[ferredoxin]. The protein operates within protein modification; protein lipoylation via endogenous pathway; protein N(6)-(lipoyl)lysine from octanoyl-[acyl-carrier-protein]: step 2/2. Functionally, catalyzes the radical-mediated insertion of two sulfur atoms into the C-6 and C-8 positions of the octanoyl moiety bound to the lipoyl domains of lipoate-dependent enzymes, thereby converting the octanoylated domains into lipoylated derivatives. In Plasmodium vivax (strain Salvador I), this protein is Lipoyl synthase, apicoplast.